The chain runs to 260 residues: uncharacterized protein (260 aa).

A signal peptide spans 1 to 22 (MKSIKRIGLCISLLILIIFATS). A lipid anchor (N-palmitoyl cysteine) is attached at C23. C23 carries the S-diacylglycerol cysteine lipid modification.

It belongs to the staphylococcal tandem lipoprotein family.

The protein resides in the cell membrane. This is an uncharacterized protein from Staphylococcus aureus (strain N315).